The primary structure comprises 303 residues: Cyclin-dependent kinase 4 (303 aa).

An N-acetylalanine modification is found at Ala-2. One can recognise a Protein kinase domain in the interval 6–295; the sequence is YEPVAEIGVG…AFRALQHSYL (290 aa). Residues 12–20 and Lys-35 contribute to the ATP site; that span reads IGVGAYGTV. The required for binding D-type cyclins stretch occupies residues 50–56; the sequence is PVSTVRE. Asp-140 serves as the catalytic Proton acceptor. Thr-172 carries the phosphothreonine; by CAK modification. Phosphoserine is present on Ser-300.

Belongs to the protein kinase superfamily. CMGC Ser/Thr protein kinase family. CDC2/CDKX subfamily. Component of the D-CDK4 complex, composed of CDK4 and some D-type G1 cyclin (CCND1, CCND2 or CCND3). Interacts directly in the complex with CCND1, CCND2 or CCND3. Interacts with SEI1 and ZNF655. Forms a ternary complex, cyclin D-CDK4-CDKN1B, involved in modulating CDK4 enzymatic activity. Interacts directly with CDKN1B (phosphorylated on 'Tyr-88' and 'Tyr-89'); the interaction allows assembly of the cyclin D-CDK4 complex, Thr-172 phosphorylation, nuclear translocation and enhances the cyclin D-CDK4 complex activity. CDK4 activity is either inhibited or enhanced depending on stoichiometry of complex. The non-tyrosine-phosphorylated form of CDKN1B prevents T-loop phosphorylation of CDK4 producing inactive CDK4. Interacts (unphosphorylated form) with CDK2. Also forms ternary complexes with CDKN1A or CDKN2A. Interacts directly with CDKN1A (via its N-terminal); the interaction promotes the assembly of the cyclin D-CDK4 complex, its nuclear translocation and promotes the cyclin D-dependent enzyme activity of CDK4. Interacts with CCND1; the interaction is prevented with the binding of CCND1 to INSM1 during cell cycle progression. Probably forms a complex composed of chaperones HSP90 and HSP70, co-chaperones CDC37, PPP5C, TSC1 and client protein TSC2, CDK4, AKT, RAF1 and NR3C1; this complex does not contain co-chaperones STIP1/HOP and PTGES3/p23. Interacts with CEBPA (when phosphorylated). Interacts with FNIP1 and FNIP2. As to expression, expressed in fetal and adult lung. Also expressed in brain, heart, liver, skeletal muscle and testes.

It is found in the cytoplasm. The protein localises to the nucleus. Its subcellular location is the nucleus membrane. The enzyme catalyses L-seryl-[protein] + ATP = O-phospho-L-seryl-[protein] + ADP + H(+). The catalysed reaction is L-threonyl-[protein] + ATP = O-phospho-L-threonyl-[protein] + ADP + H(+). Its activity is regulated as follows. Both phosphorylation at Thr-172 and binding of a D-type cyclin are necessary for enzymatic activity. Full activation of the cyclin-D-CDK4 complex appears to require other factors such as recruitment of the substrate via a substrate recruitment motif, and/or formation of the CDKN1B ternary complex. Inhibited by INK4 family members. In resting cells, the non-tyrosine-phosphorylated form of CDKN1B prevents phosphorylation at Thr-172 and inactivation, while, in proliferating cells, tyrosine phosphorylation of CDKN1B allows phosphorylation of Thr-172 of CDK4 and subsequent activation. Ser/Thr-kinase component of cyclin D-CDK4 (DC) complexes that phosphorylate and inhibit members of the retinoblastoma (RB) protein family including RB1 and regulate the cell-cycle during G(1)/S transition. Phosphorylation of RB1 allows dissociation of the transcription factor E2F from the RB/E2F complexes and the subsequent transcription of E2F target genes which are responsible for the progression through the G(1) phase. Hypophosphorylates RB1 in early G(1) phase. Cyclin D-CDK4 complexes are major integrators of various mitogenenic and antimitogenic signals. Also phosphorylates SMAD3 in a cell-cycle-dependent manner and represses its transcriptional activity. Component of the ternary complex, cyclin D/CDK4/CDKN1B, required for nuclear translocation and activity of the cyclin D-CDK4 complex. The sequence is that of Cyclin-dependent kinase 4 (Cdk4) from Rattus norvegicus (Rat).